The following is a 159-amino-acid chain: 2-C-methyl-D-erythritol 2,4-cyclodiphosphate synthase (159 aa).

A divalent metal cation contacts are provided by aspartate 10 and histidine 12. 4-CDP-2-C-methyl-D-erythritol 2-phosphate is bound by residues 10 to 12 (DVH) and 36 to 37 (HS). Histidine 44 contributes to the a divalent metal cation binding site. 4-CDP-2-C-methyl-D-erythritol 2-phosphate contacts are provided by residues 58–60 (DIG), 63–67 (FSDTD), and arginine 144.

The protein belongs to the IspF family. As to quaternary structure, homotrimer. Requires a divalent metal cation as cofactor.

The enzyme catalyses 4-CDP-2-C-methyl-D-erythritol 2-phosphate = 2-C-methyl-D-erythritol 2,4-cyclic diphosphate + CMP. It functions in the pathway isoprenoid biosynthesis; isopentenyl diphosphate biosynthesis via DXP pathway; isopentenyl diphosphate from 1-deoxy-D-xylulose 5-phosphate: step 4/6. Its function is as follows. Involved in the biosynthesis of isopentenyl diphosphate (IPP) and dimethylallyl diphosphate (DMAPP), two major building blocks of isoprenoid compounds. Catalyzes the conversion of 4-diphosphocytidyl-2-C-methyl-D-erythritol 2-phosphate (CDP-ME2P) to 2-C-methyl-D-erythritol 2,4-cyclodiphosphate (ME-CPP) with a corresponding release of cytidine 5-monophosphate (CMP). The protein is 2-C-methyl-D-erythritol 2,4-cyclodiphosphate synthase of Paraburkholderia xenovorans (strain LB400).